The sequence spans 208 residues: High frequency lysogenization protein HflD homolog (208 aa).

It belongs to the HflD family.

Its subcellular location is the cytoplasm. It localises to the cell inner membrane. In Yersinia enterocolitica serotype O:8 / biotype 1B (strain NCTC 13174 / 8081), this protein is High frequency lysogenization protein HflD homolog.